Reading from the N-terminus, the 435-residue chain is Chaperone SurA (435 aa).

A signal peptide spans 1 to 29; the sequence is MINKTLHTKHTLLGLLAMAVLMIPVWSQA. 2 consecutive PpiC domains span residues 180–281 and 290–390; these read QEDF…KMID and VTQY…RVDD.

It localises to the periplasm. It carries out the reaction [protein]-peptidylproline (omega=180) = [protein]-peptidylproline (omega=0). Its function is as follows. Chaperone involved in the correct folding and assembly of outer membrane proteins. Recognizes specific patterns of aromatic residues and the orientation of their side chains, which are found more frequently in integral outer membrane proteins. May act in both early periplasmic and late outer membrane-associated steps of protein maturation. The protein is Chaperone SurA of Alcanivorax borkumensis (strain ATCC 700651 / DSM 11573 / NCIMB 13689 / SK2).